The chain runs to 242 residues: uncharacterized protein (242 aa).

S-adenosyl-L-methionine-binding residues include Gly198, Ile218, and Leu227.

Belongs to the class IV-like SAM-binding methyltransferase superfamily. RNA methyltransferase TrmH family.

This is an uncharacterized protein from Mycoplasma pneumoniae (strain ATCC 29342 / M129 / Subtype 1) (Mycoplasmoides pneumoniae).